The sequence spans 160 residues: SsrA-binding protein (160 aa).

The disordered stretch occupies residues 131-160; the sequence is KKEYDKRHTERERDSDRELQRAVRSKGKDD.

The protein belongs to the SmpB family.

It localises to the cytoplasm. Functionally, required for rescue of stalled ribosomes mediated by trans-translation. Binds to transfer-messenger RNA (tmRNA), required for stable association of tmRNA with ribosomes. tmRNA and SmpB together mimic tRNA shape, replacing the anticodon stem-loop with SmpB. tmRNA is encoded by the ssrA gene; the 2 termini fold to resemble tRNA(Ala) and it encodes a 'tag peptide', a short internal open reading frame. During trans-translation Ala-aminoacylated tmRNA acts like a tRNA, entering the A-site of stalled ribosomes, displacing the stalled mRNA. The ribosome then switches to translate the ORF on the tmRNA; the nascent peptide is terminated with the 'tag peptide' encoded by the tmRNA and targeted for degradation. The ribosome is freed to recommence translation, which seems to be the essential function of trans-translation. This chain is SsrA-binding protein, found in Pseudomonas syringae pv. syringae (strain B728a).